A 285-amino-acid chain; its full sequence is 3-methyl-2-oxobutanoate hydroxymethyltransferase (285 aa).

The segment at 1-22 (MSEHNVYGAAQPAQPGQPAQPR) is disordered. Positions 8–21 (GAAQPAQPGQPAQP) are enriched in low complexity. Residues Asp66 and Asp105 each contribute to the Mg(2+) site. 3-methyl-2-oxobutanoate contacts are provided by residues 66–67 (DS), Asp105, and Lys135. Glu137 serves as a coordination point for Mg(2+). Residue Glu203 is the Proton acceptor of the active site.

The protein belongs to the PanB family. Homodecamer; pentamer of dimers. Requires Mg(2+) as cofactor.

The protein localises to the cytoplasm. It catalyses the reaction 3-methyl-2-oxobutanoate + (6R)-5,10-methylene-5,6,7,8-tetrahydrofolate + H2O = 2-dehydropantoate + (6S)-5,6,7,8-tetrahydrofolate. The protein operates within cofactor biosynthesis; (R)-pantothenate biosynthesis; (R)-pantoate from 3-methyl-2-oxobutanoate: step 1/2. Its function is as follows. Catalyzes the reversible reaction in which hydroxymethyl group from 5,10-methylenetetrahydrofolate is transferred onto alpha-ketoisovalerate to form ketopantoate. The protein is 3-methyl-2-oxobutanoate hydroxymethyltransferase of Mycolicibacterium paratuberculosis (strain ATCC BAA-968 / K-10) (Mycobacterium paratuberculosis).